We begin with the raw amino-acid sequence, 217 residues long: Small ribosomal subunit protein uS3 (217 aa).

Positions 38–106 (IRKFIQKELA…QVHINIIEIK (69 aa)) constitute a KH type-2 domain.

It belongs to the universal ribosomal protein uS3 family. Part of the 30S ribosomal subunit. Forms a tight complex with proteins S10 and S14.

Its function is as follows. Binds the lower part of the 30S subunit head. Binds mRNA in the 70S ribosome, positioning it for translation. This Streptococcus uberis (strain ATCC BAA-854 / 0140J) protein is Small ribosomal subunit protein uS3.